Here is a 106-residue protein sequence, read N- to C-terminus: Venom family 8-like peptide Pr8a (106 aa).

The first 17 residues, 1–17, serve as a signal peptide directing secretion; the sequence is MSPIAFLLPFLLQMVLS.

Contains 2 disulfide bonds. Expressed by the venom gland (anterior main gland) (at protein level).

It localises to the secreted. This chain is Venom family 8-like peptide Pr8a, found in Platymeris rhadamanthus (Red spot assassin bug).